Reading from the N-terminus, the 130-residue chain is Flagellar assembly factor FliW (130 aa).

It belongs to the FliW family. Interacts with translational regulator CsrA and flagellin(s).

The protein localises to the cytoplasm. In terms of biological role, acts as an anti-CsrA protein, binds CsrA and prevents it from repressing translation of its target genes, one of which is flagellin. Binds to flagellin and participates in the assembly of the flagellum. This Borreliella burgdorferi (strain ATCC 35210 / DSM 4680 / CIP 102532 / B31) (Borrelia burgdorferi) protein is Flagellar assembly factor FliW.